The primary structure comprises 327 residues: Regulatory protein MsrR (327 aa).

Positions 1–18 are enriched in basic and acidic residues; it reads MDKETNDNEYRRQSEHRT. Positions 1–24 are disordered; sequence MDKETNDNEYRRQSEHRTSAPKRK. Residues 1–31 are Cytoplasmic-facing; the sequence is MDKETNDNEYRRQSEHRTSAPKRKKKKKIRK. The chain crosses the membrane as a helical; Signal-anchor for type II membrane protein span at residues 32–52; sequence LPIILLIVVILLIALVVYIVH. Residues 53 to 327 are Extracellular-facing; the sequence is SYNSGVEYAK…QAIKDFLDED (275 aa).

Belongs to the LytR/CpsA/Psr (LCP) family.

The protein resides in the cell membrane. In terms of biological role, involved in SarA attenuation. Affects resistance to oxacillin and teicoplanin, as well as the synthesis of virulence factors. In Staphylococcus aureus (strain Mu50 / ATCC 700699), this protein is Regulatory protein MsrR (msrR).